Consider the following 720-residue polypeptide: MELGCWTQLGLTFLQLLLISSLPREYTVINEACPGAEWNIMCRECCEYDQIECVCPGKKEVVGYTIPCCRNEENECDSCLIHPGCTIFENCKSCRNGSWGGTLDDFYVKGFYCAECRAGWYGGDCMRCGQVLRAPKGQILLESYPLNAHCEWTIHAKPGFVIQLRFVMLSLEFDYMCQYDYVEVRDGDNRDGQIIKRVCGNERPAPIQSTGSSLHVLFHSDGSKNFDGFHAIFEEITACSSSPCFHDGTCVLDKAGSYKCACLAGYTGQRCENLLEERNCSDPGGPVNGYQKITGGPGLINGRHAKIGTVVSFFCNNSYVLSGNEKRTCQQNGEWSGKQPICIKACREPKISDLVRRRVLPIQVQSRETPLHQLYSAAFSKQKLQSAPTKKPALPFGDLPMGYQHLHTQLQYECISPFYRRLGSSRRTCLRTGKWSGQAPSCIPICGKIENVTAPKTQGLRWPWQAAIYRRTSGVHDGSLHKGAWFLVCSGALVNERTVVVAAHCVTDLGKVTMIKTADLKVILGKFYRDDDRDEKTTQSLRISAIILHPNYDPILLDADIAILKLLDKARISTRVQPICLAASRDLSTSFQESHITVAGWNVLADVRSPGFKNDTLRSGVVSVVDSLLCEEQHEDHGIPVSVTDNMFCASQDPTAPSDICTAETGGIAAVSFPGRASPEPRWHLMGLVSWSYDKTCSHRLSTAFTKVLPFKDWIERNMK.

A signal peptide spans 1–21 (MELGCWTQLGLTFLQLLLISS). 8 disulfides stabilise this stretch: Cys-128-Cys-150, Cys-177-Cys-199, Cys-239-Cys-250, Cys-244-Cys-260, Cys-262-Cys-271, Cys-280-Cys-329, Cys-315-Cys-342, and Cys-414-Cys-442. Residues 128–236 (CGQVLRAPKG…DGFHAIFEEI (109 aa)) enclose the CUB domain. The 38-residue stretch at 235-272 (EITACSSSPCFHDGTCVLDKAGSYKCACLAGYTGQRCE) folds into the EGF-like domain. Sushi domains lie at 278 to 344 (RNCS…ICIK) and 387 to 444 (APTK…SCIP). The region spanning 445-720 (ICGKIENVTA…FKDWIERNMK (276 aa)) is the Peptidase S1 domain. Asn-451 is a glycosylation site (N-linked (GlcNAc...) asparagine). Cys-489 and Cys-505 are oxidised to a cystine. An N-linked (GlcNAc...) asparagine glycan is attached at Asn-614. Cystine bridges form between Cys-630/Cys-649 and Cys-661/Cys-697.

It belongs to the peptidase S1 family.

The protein resides in the secreted. Its function is as follows. May play a role in regeneration of skeletal muscle. The chain is Inactive serine protease PAMR1 (PAMR1) from Pongo abelii (Sumatran orangutan).